The chain runs to 159 residues: Flagellar assembly factor FliW (159 aa).

It belongs to the FliW family. As to quaternary structure, interacts with translational regulator CsrA and flagellin(s).

The protein resides in the cytoplasm. Its function is as follows. Acts as an anti-CsrA protein, binds CsrA and prevents it from repressing translation of its target genes, one of which is flagellin. Binds to flagellin and participates in the assembly of the flagellum. This Geobacter sulfurreducens (strain ATCC 51573 / DSM 12127 / PCA) protein is Flagellar assembly factor FliW.